The following is a 429-amino-acid chain: Adenylosuccinate synthetase (429 aa).

GTP contacts are provided by residues 12-18 (GDEGKGK) and 40-42 (GHT). Residue D13 is the Proton acceptor of the active site. Mg(2+)-binding residues include D13 and G40. IMP contacts are provided by residues 13–16 (DEGK), 38–41 (NAGH), T128, R142, Q223, T238, and R302. Catalysis depends on H41, which acts as the Proton donor. 298 to 304 (VNTGRPR) contacts substrate. Residues R304, 330-332 (KLD), and 412-414 (GVG) each bind GTP.

This sequence belongs to the adenylosuccinate synthetase family. Homodimer. Mg(2+) serves as cofactor.

The protein localises to the cytoplasm. The catalysed reaction is IMP + L-aspartate + GTP = N(6)-(1,2-dicarboxyethyl)-AMP + GDP + phosphate + 2 H(+). The protein operates within purine metabolism; AMP biosynthesis via de novo pathway; AMP from IMP: step 1/2. Functionally, plays an important role in the de novo pathway of purine nucleotide biosynthesis. Catalyzes the first committed step in the biosynthesis of AMP from IMP. The polypeptide is Adenylosuccinate synthetase (Renibacterium salmoninarum (strain ATCC 33209 / DSM 20767 / JCM 11484 / NBRC 15589 / NCIMB 2235)).